Reading from the N-terminus, the 154-residue chain is Transcriptional repressor NrdR (154 aa).

A zinc finger lies at 3–34 (CPHCHKNGSRVVDSRPSEDGSFIRRRRECIHC). One can recognise an ATP-cone domain in the interval 49-139 (LLVIKKDGTR…VYRQFKDVDA (91 aa)).

Belongs to the NrdR family. It depends on Zn(2+) as a cofactor.

Negatively regulates transcription of bacterial ribonucleotide reductase nrd genes and operons by binding to NrdR-boxes. The protein is Transcriptional repressor NrdR of Limosilactobacillus reuteri (strain DSM 20016) (Lactobacillus reuteri).